The sequence spans 168 residues: Cell division inhibitor SulA (168 aa).

The segment at 106-112 (ALLTGNY) is ftsZ binding. A lon protease binding region spans residues 161-168 (KIHSYLYH).

Belongs to the SulA family. Interacts with FtsZ. Is rapidly cleaved and degraded by the Lon protease once DNA damage is repaired.

In terms of biological role, component of the SOS system and an inhibitor of cell division. Accumulation of SulA causes rapid cessation of cell division and the appearance of long, non-septate filaments. In the presence of GTP, binds a polymerization-competent form of FtsZ in a 1:1 ratio, thus inhibiting FtsZ polymerization and therefore preventing it from participating in the assembly of the Z ring. This mechanism prevents the premature segregation of damaged DNA to daughter cells during cell division. This chain is Cell division inhibitor SulA, found in Yersinia pestis bv. Antiqua (strain Antiqua).